The sequence spans 593 residues: DEAD-box ATP-dependent RNA helicase 18 (593 aa).

Residues 16 to 44 carry the Q motif motif; the sequence is FSDLEPPLSGDIIEALNQSDFEFCTPVQA. The region spanning 47-226 is the Helicase ATP-binding domain; sequence IPLLCSYKDV…KAGLRNPVRV (180 aa). 60–67 provides a ligand contact to ATP; sequence AATGSGKT. A DEAD box motif is present at residues 174–177; it reads DEAD. The region spanning 264–411 is the Helicase C-terminal domain; the sequence is QLVDLLIKNS…ERKCSEDASD (148 aa). The span at 506 to 524 shows a compositional bias: basic and acidic residues; sequence QRQQNLQVRKEKRQEEKKE. The interval 506 to 561 is disordered; that stretch reads QRQQNLQVRKEKRQEEKKEKGKRKRVDASASNDPKKASRKLTGKQRQTIQTAEDEE.

This sequence belongs to the DEAD box helicase family. DDX55/SPB4 subfamily.

The catalysed reaction is ATP + H2O = ADP + phosphate + H(+). This Arabidopsis thaliana (Mouse-ear cress) protein is DEAD-box ATP-dependent RNA helicase 18 (RH18).